The primary structure comprises 172 residues: Large ribosomal subunit protein uL10 (172 aa).

This sequence belongs to the universal ribosomal protein uL10 family. As to quaternary structure, part of the ribosomal stalk of the 50S ribosomal subunit. The N-terminus interacts with L11 and the large rRNA to form the base of the stalk. The C-terminus forms an elongated spine to which L12 dimers bind in a sequential fashion forming a multimeric L10(L12)X complex.

In terms of biological role, forms part of the ribosomal stalk, playing a central role in the interaction of the ribosome with GTP-bound translation factors. The sequence is that of Large ribosomal subunit protein uL10 from Rhizobium johnstonii (strain DSM 114642 / LMG 32736 / 3841) (Rhizobium leguminosarum bv. viciae).